Reading from the N-terminus, the 243-residue chain is Pyridoxine 5'-phosphate synthase (243 aa).

Asparagine 9 lines the 3-amino-2-oxopropyl phosphate pocket. Residue 11–12 (DH) coordinates 1-deoxy-D-xylulose 5-phosphate. Arginine 20 provides a ligand contact to 3-amino-2-oxopropyl phosphate. The Proton acceptor role is filled by histidine 45. Positions 47 and 52 each coordinate 1-deoxy-D-xylulose 5-phosphate. Glutamate 72 (proton acceptor) is an active-site residue. A 1-deoxy-D-xylulose 5-phosphate-binding site is contributed by threonine 102. Histidine 193 serves as the catalytic Proton donor. 3-amino-2-oxopropyl phosphate contacts are provided by residues glycine 194 and 215–216 (GH).

The protein belongs to the PNP synthase family. In terms of assembly, homooctamer; tetramer of dimers.

It is found in the cytoplasm. It catalyses the reaction 3-amino-2-oxopropyl phosphate + 1-deoxy-D-xylulose 5-phosphate = pyridoxine 5'-phosphate + phosphate + 2 H2O + H(+). It functions in the pathway cofactor biosynthesis; pyridoxine 5'-phosphate biosynthesis; pyridoxine 5'-phosphate from D-erythrose 4-phosphate: step 5/5. Catalyzes the complicated ring closure reaction between the two acyclic compounds 1-deoxy-D-xylulose-5-phosphate (DXP) and 3-amino-2-oxopropyl phosphate (1-amino-acetone-3-phosphate or AAP) to form pyridoxine 5'-phosphate (PNP) and inorganic phosphate. This chain is Pyridoxine 5'-phosphate synthase, found in Salmonella paratyphi A (strain ATCC 9150 / SARB42).